The sequence spans 423 residues: Large ribosomal subunit protein mL37 (423 aa).

The transit peptide at 1 to 29 (MALASGPAMRALAGSARLGLGGYGAPKRG) directs the protein to the mitochondrion.

It belongs to the mitochondrion-specific ribosomal protein mL37 family. Component of the mitochondrial ribosome large subunit (39S) which comprises a 16S rRNA and about 50 distinct proteins.

Its subcellular location is the mitochondrion. This Rattus norvegicus (Rat) protein is Large ribosomal subunit protein mL37 (Mrpl37).